The following is a 163-amino-acid chain: Succinate dehydrogenase assembly factor 2-A, mitochondrial (163 aa).

The transit peptide at 1–23 directs the protein to the mitochondrion; sequence MLRQLRLTMDISGWIFLPWRRSM.

The protein belongs to the SDHAF2 family. As to quaternary structure, interacts with the flavoprotein subunit within the SDH catalytic dimer.

The protein resides in the mitochondrion matrix. Its function is as follows. Plays an essential role in the assembly of succinate dehydrogenase (SDH), an enzyme complex (also referred to as respiratory complex II) that is a component of both the tricarboxylic acid (TCA) cycle and the mitochondrial electron transport chain, and which couples the oxidation of succinate to fumarate with the reduction of ubiquinone (coenzyme Q) to ubiquinol. Required for flavinylation (covalent attachment of FAD) of the flavoprotein subunit of the SDH catalytic dimer. The sequence is that of Succinate dehydrogenase assembly factor 2-A, mitochondrial from Drosophila sechellia (Fruit fly).